A 556-amino-acid polypeptide reads, in one-letter code: Formate--tetrahydrofolate ligase (556 aa).

Residue Thr-65 to Thr-72 coordinates ATP.

Belongs to the formate--tetrahydrofolate ligase family.

It carries out the reaction (6S)-5,6,7,8-tetrahydrofolate + formate + ATP = (6R)-10-formyltetrahydrofolate + ADP + phosphate. It participates in one-carbon metabolism; tetrahydrofolate interconversion. The protein is Formate--tetrahydrofolate ligase of Symbiobacterium thermophilum (strain DSM 24528 / JCM 14929 / IAM 14863 / T).